A 300-amino-acid chain; its full sequence is 4-hydroxy-tetrahydrodipicolinate synthase (300 aa).

Pyruvate is bound at residue Thr46. Tyr134 (proton donor/acceptor) is an active-site residue. Catalysis depends on Lys162, which acts as the Schiff-base intermediate with substrate. Val204 provides a ligand contact to pyruvate.

It belongs to the DapA family. In terms of assembly, homotetramer; dimer of dimers.

The protein localises to the cytoplasm. The catalysed reaction is L-aspartate 4-semialdehyde + pyruvate = (2S,4S)-4-hydroxy-2,3,4,5-tetrahydrodipicolinate + H2O + H(+). Its pathway is amino-acid biosynthesis; L-lysine biosynthesis via DAP pathway; (S)-tetrahydrodipicolinate from L-aspartate: step 3/4. Its function is as follows. Catalyzes the condensation of (S)-aspartate-beta-semialdehyde [(S)-ASA] and pyruvate to 4-hydroxy-tetrahydrodipicolinate (HTPA). The protein is 4-hydroxy-tetrahydrodipicolinate synthase of Heliobacterium modesticaldum (strain ATCC 51547 / Ice1).